The chain runs to 515 residues: ATP synthase subunit alpha (515 aa).

Gly171 to Thr178 is a binding site for ATP.

This sequence belongs to the ATPase alpha/beta chains family. As to quaternary structure, F-type ATPases have 2 components, CF(1) - the catalytic core - and CF(0) - the membrane proton channel. CF(1) has five subunits: alpha(3), beta(3), gamma(1), delta(1), epsilon(1). CF(0) has three main subunits: a(1), b(2) and c(9-12). The alpha and beta chains form an alternating ring which encloses part of the gamma chain. CF(1) is attached to CF(0) by a central stalk formed by the gamma and epsilon chains, while a peripheral stalk is formed by the delta and b chains.

The protein resides in the cell inner membrane. It catalyses the reaction ATP + H2O + 4 H(+)(in) = ADP + phosphate + 5 H(+)(out). Functionally, produces ATP from ADP in the presence of a proton gradient across the membrane. The alpha chain is a regulatory subunit. The sequence is that of ATP synthase subunit alpha from Xylella fastidiosa (strain 9a5c).